Reading from the N-terminus, the 1270-residue chain is MSSVAVLTQESFAEHRSGLTQQQVKVTALNSEEENDPPTYKEAFPPLPEKAPCLEAAQEPSGPWSKIRPIKASVITQVFHVPLEERKYKDMNQFGEGEQAKICLDIMQKTGAHLELSLAKDQGLSIMVSGKLEAVMKARKEIVARLQTQASATVAIPKEHHRFVIGKNGEKLQDLELKTATKIQIPRPDDPSNQIKITGTKEGIEKARHEILLISAEQDKRAVERLDVEKVYHPFIAGPYNKLVSELMQDTGTRINIPPPSVNKTEIVFTGEKEQLAQAVARVKKIYEEKKKKTTTIAVEVKKSQHKYVIGRKGNSLQEILEKTGVSVEIPPTDSSSETVILRGEPEKLGQALTEVYAKANSFTVSSVSAPSWLHRFIIGLFGQNLAKITQQMPKIHIEFTEGEDKITSEGPTEDVNVAQEQIEVMVKDLINRTDYAEINVDHKFHRHLIGKNGANINRIKDLYKVSVRIPPDNEKSNLIRIEGDPQGVQQAKKELLELASRMENERTKDLIIEQKFHRTIIGQKGERIREIREKFPEVIINFPDPAHKSDIVQLRGPKNEVEKCTKYMQKMVADLVENSFSISVPIFKQFHKNIIGKGGANIKKIREESNTKIDLPGREQATQRQLLSQGREQTVKLLRHRILAIQKELANITEVEVSIPSKLHNSLIGAKGRFIRSIMEECGGVHIHFPTEGSGSATVTIRAQPRTWRKPRSSCCTWAEEKQTKSYTVDLRAKPEYHKFLIGKGGGNIRKVRDNTGARIIFPTSEDKDQELITIMGTEEAVKEAQKELEALIKNLDNVVEDSMVVDPKHHRHFVIRRGQVLREIADEYGGVMVRLPTVSGTQSDKVTLKGAKDCVEAAKKRIQEIIEDLEAQVTIECTIPQKFHRSIMGPKGSRIQQITRDYGVQIKFPDREENPAPVAEPALQENGEEGGEGKDGKDADPSSPRKCDIIIISGRREKCEAAKEALQALVPVTIEVEVPFDLHRYIIGQKGSGIRKMMDEFEVNIQVPAPELQSSDIITITGLAANLDRAKAGLLERVKELQAEQEDRALRSFKLTVTVDPKYHPKIIGRKGAVITQIRTEHEVNIQFPDKDDESQAQDQITITGYEKNAEAARDAIMKIVGELEQMVSEDVTLDHRVHARIIGARGKAIRKIMDEFKVDIRFPQSGAPDPNCVTVTGLPENVEEAIDHILNLEEEYLADVVDNEAMQVYMKPSSHEESKVPSKGFVVRDAPCGTVNNEKAPDMSSSEDFPSFGAQVAPKTLPWGPKR.

Positions 1 to 11 are enriched in polar residues; that stretch reads MSSVAVLTQES. 2 disordered regions span residues 1 to 23 and 28 to 47; these read MSSV…TQQQ and ALNS…FPPL. 11 KH domains span residues 150–188, 219–260, 291–333, 360–402, 431–473, 504–545, 577–619, 651–693, 724–766, 798–840, and 872–913; these read ASAT…IPRP, DKRA…IPPP, KKKT…IPPT, ANSF…EFTE, INRT…IPPD, ENER…NFPD, VENS…LPGR, ANIT…FPTE, QTKS…FPTS, DNVV…LPTV, and EAQV…FPDR. A disordered region spans residues 911-947; it reads PDREENPAPVAEPALQENGEEGGEGKDGKDADPSSPR. Residues 933 to 947 show a composition bias toward basic and acidic residues; the sequence is GEGKDGKDADPSSPR. 3 KH domains span residues 970 to 1012, 1051 to 1093, and 1126 to 1168; these read ALVP…VPAP, ALRS…FPDK, and LEQM…FPQS. The interval 1217 to 1270 is disordered; it reads SHEESKVPSKGFVVRDAPCGTVNNEKAPDMSSSEDFPSFGAQVAPKTLPWGPKR.

It is found in the cytoplasm. The chain is Vigilin (HDLBP) from Gallus gallus (Chicken).